The primary structure comprises 246 residues: Probable transcriptional regulatory protein YebC (246 aa).

A disordered region spans residues 1–20 (MAGHSKWANTRHRKAAQDAK).

Belongs to the TACO1 family.

Its subcellular location is the cytoplasm. In Shigella flexneri, this protein is Probable transcriptional regulatory protein YebC.